We begin with the raw amino-acid sequence, 217 residues long: ATP-dependent Clp protease proteolytic subunit (217 aa).

Ser-121 serves as the catalytic Nucleophile. The active site involves His-146.

It belongs to the peptidase S14 family. In terms of assembly, fourteen ClpP subunits assemble into 2 heptameric rings which stack back to back to give a disk-like structure with a central cavity, resembling the structure of eukaryotic proteasomes.

It is found in the cytoplasm. It catalyses the reaction Hydrolysis of proteins to small peptides in the presence of ATP and magnesium. alpha-casein is the usual test substrate. In the absence of ATP, only oligopeptides shorter than five residues are hydrolyzed (such as succinyl-Leu-Tyr-|-NHMec, and Leu-Tyr-Leu-|-Tyr-Trp, in which cleavage of the -Tyr-|-Leu- and -Tyr-|-Trp bonds also occurs).. Its function is as follows. Cleaves peptides in various proteins in a process that requires ATP hydrolysis. Has a chymotrypsin-like activity. Plays a major role in the degradation of misfolded proteins. The chain is ATP-dependent Clp protease proteolytic subunit from Burkholderia lata (strain ATCC 17760 / DSM 23089 / LMG 22485 / NCIMB 9086 / R18194 / 383).